The following is a 156-amino-acid chain: Small ribosomal subunit protein uS7 (156 aa).

Belongs to the universal ribosomal protein uS7 family. Part of the 30S ribosomal subunit. Contacts proteins S9 and S11.

In terms of biological role, one of the primary rRNA binding proteins, it binds directly to 16S rRNA where it nucleates assembly of the head domain of the 30S subunit. Is located at the subunit interface close to the decoding center, probably blocks exit of the E-site tRNA. This chain is Small ribosomal subunit protein uS7, found in Nitrobacter hamburgensis (strain DSM 10229 / NCIMB 13809 / X14).